A 161-amino-acid chain; its full sequence is Capsid protein (161 aa).

The protein belongs to the virgaviridae capsid protein family.

The protein resides in the virion. Capsid protein self-assembles to form rod-shaped virions about 18 nm in diameter with a central canal enclosing the viral genomic RNA. This Tobamovirus Ob protein is Capsid protein (CP).